The following is a 330-amino-acid chain: MCISKEDEEDPSRNRRNQSPLSLPQTLKHFQKDLLAGAVMGGVVHTIVAPIERAKLLLQTQESNIAIVGDEGHAGKRRFKGMFDFIFRTVREEGVLSLWRGNGSSVLRYYPSVALNFSLKDLYRSILRNSSSQENHIFSGALANFMAGSAAGCTALIVVYPLDIAHTRLAADIGKPEARQFRGIHHFLSTIHKKDGVRGIYRGLPASLHGVIIHRGLYFGGFDTVKEIFSEDTKPELALWKRWGLAQAVTTSAGLASYPLDTVRRRIMMQSGMEHPMYRSTLDCWKKIYRSEGLASFYRGALSNMFRSTGSAAILVFYDEVKRFLNWGGI.

A compositionally biased stretch (acidic residues) spans 1–10 (MCISKEDEED). The segment at 1-22 (MCISKEDEEDPSRNRRNQSPLS) is disordered. Helical transmembrane passes span 27–61 (LKHF…LQTQ), 103–127 (GSSV…RSIL), 137–171 (IFSG…RLAA), 203–230 (GLPA…EIFS), 236–270 (ELAL…IMMQ), and 300–325 (GALS…KRFL). Solcar repeat units lie at residues 28–126 (KHFQ…YRSI), 139–228 (SGAL…VKEI), and 241–324 (KRWG…VKRF). 2 residues coordinate ADP: Arg-108 and Lys-120. ADP is bound at residue Arg-264. A Substrate recognition motif is present at residues 264-269 (RRRIMM).

This sequence belongs to the mitochondrial carrier (TC 2.A.29) family. Monomer.

The protein localises to the membrane. The catalysed reaction is ADP(in) + ATP(out) = ADP(out) + ATP(in). In terms of biological role, ADP:ATP antiporter that catalyzes the exchange of ADP and ATP across the membrane. This Arabidopsis thaliana (Mouse-ear cress) protein is Probable ADP,ATP carrier protein At5g56450.